Reading from the N-terminus, the 335-residue chain is NADH-quinone oxidoreductase subunit H (335 aa).

The next 8 membrane-spanning stretches (helical) occupy residues 11-31, 81-101, 114-134, 154-174, 187-207, 238-258, 270-290, and 309-329; these read VIIS…AGAL, VIFT…FAVI, IGLL…LFAG, VSYE…VGSF, LWFI…GVAV, FFVG…TLFF, QLAF…FILL, and FCLP…LLNT.

It belongs to the complex I subunit 1 family. In terms of assembly, NDH-1 is composed of 13 different subunits. Subunits NuoA, H, J, K, L, M, N constitute the membrane sector of the complex.

The protein localises to the cell inner membrane. It catalyses the reaction a quinone + NADH + 5 H(+)(in) = a quinol + NAD(+) + 4 H(+)(out). Functionally, NDH-1 shuttles electrons from NADH, via FMN and iron-sulfur (Fe-S) centers, to quinones in the respiratory chain. The immediate electron acceptor for the enzyme in this species is believed to be ubiquinone. Couples the redox reaction to proton translocation (for every two electrons transferred, four hydrogen ions are translocated across the cytoplasmic membrane), and thus conserves the redox energy in a proton gradient. This subunit may bind ubiquinone. The protein is NADH-quinone oxidoreductase subunit H of Pseudomonas fluorescens (strain SBW25).